The primary structure comprises 129 residues: UPF0325 protein YE3288 (129 aa).

The protein belongs to the UPF0325 family.

This Yersinia enterocolitica serotype O:8 / biotype 1B (strain NCTC 13174 / 8081) protein is UPF0325 protein YE3288.